The primary structure comprises 312 residues: Malate dehydrogenase (312 aa).

Residues 7–13 (GAAGGIG) and Asp-34 contribute to the NAD(+) site. Substrate contacts are provided by Arg-81 and Arg-87. Residues Asn-94 and 117-119 (ITN) each bind NAD(+). Asn-119 and Arg-153 together coordinate substrate. His-177 functions as the Proton acceptor in the catalytic mechanism. Residue Met-227 coordinates NAD(+).

This sequence belongs to the LDH/MDH superfamily. MDH type 1 family. As to quaternary structure, homodimer.

The enzyme catalyses (S)-malate + NAD(+) = oxaloacetate + NADH + H(+). Functionally, catalyzes the reversible oxidation of malate to oxaloacetate. The protein is Malate dehydrogenase of Photobacterium profundum (strain SS9).